The following is a 286-amino-acid chain: Shikimate dehydrogenase (NADP(+)) (286 aa).

Residues 21-23 (TLS) and T68 each bind shikimate. Catalysis depends on K72, which acts as the Proton acceptor. D84 contacts NADP(+). Residues N93 and D108 each contribute to the shikimate site. NADP(+) is bound by residues 132-136 (GYGGA) and L226. Y228 contacts shikimate. G249 is a binding site for NADP(+).

Belongs to the shikimate dehydrogenase family. As to quaternary structure, homodimer.

The catalysed reaction is shikimate + NADP(+) = 3-dehydroshikimate + NADPH + H(+). It participates in metabolic intermediate biosynthesis; chorismate biosynthesis; chorismate from D-erythrose 4-phosphate and phosphoenolpyruvate: step 4/7. Functionally, involved in the biosynthesis of the chorismate, which leads to the biosynthesis of aromatic amino acids. Catalyzes the reversible NADPH linked reduction of 3-dehydroshikimate (DHSA) to yield shikimate (SA). This is Shikimate dehydrogenase (NADP(+)) from Thermosynechococcus vestitus (strain NIES-2133 / IAM M-273 / BP-1).